The chain runs to 216 residues: Probable csgAB operon transcriptional regulatory protein (216 aa).

The region spanning 149–214 is the HTH luxR-type domain; it reads NSTESALLTH…QAVSWANDNL (66 aa). The H-T-H motif DNA-binding region spans 173-192; it reads NNEIARSLFISENTVKTHLY.

Its function is as follows. The master regulator for adhesive curli fimbriae expression; necessary for transcription of the csgAB operon. Plays a positive role in biofilm formation. The sequence is that of Probable csgAB operon transcriptional regulatory protein from Salmonella typhimurium (strain LT2 / SGSC1412 / ATCC 700720).